We begin with the raw amino-acid sequence, 424 residues long: Elongation factor 1-alpha (424 aa).

The tr-type G domain occupies 5-223 (KPHLNLITIG…DAFKVPEKPI (219 aa)). A G1 region spans residues 14–21 (GHVDHGKS). Position 14 to 21 (14 to 21 (GHVDHGKS)) interacts with GTP. Ser-21 contacts Mg(2+). The segment at 70 to 74 (GVTID) is G2. Residues 91 to 94 (DAPG) are G3. GTP contacts are provided by residues 91–95 (DAPGH) and 148–151 (NKMD). Residues 148–151 (NKMD) are G4. Residues 187–189 (SGY) form a G5 region.

Belongs to the TRAFAC class translation factor GTPase superfamily. Classic translation factor GTPase family. EF-Tu/EF-1A subfamily.

It localises to the cytoplasm. It carries out the reaction GTP + H2O = GDP + phosphate + H(+). In terms of biological role, GTP hydrolase that promotes the GTP-dependent binding of aminoacyl-tRNA to the A-site of ribosomes during protein biosynthesis. The protein is Elongation factor 1-alpha of Thermoplasma volcanium (strain ATCC 51530 / DSM 4299 / JCM 9571 / NBRC 15438 / GSS1).